Consider the following 526-residue polypeptide: Peptide chain release factor 3 (526 aa).

Positions 8 to 277 (SKRRTFAIIS…GLTRWAPAPQ (270 aa)) constitute a tr-type G domain. GTP contacts are provided by residues 17 to 24 (SHPDAGKT), 85 to 89 (DTPGH), and 139 to 142 (NKLD).

Belongs to the TRAFAC class translation factor GTPase superfamily. Classic translation factor GTPase family. PrfC subfamily.

The protein localises to the cytoplasm. Increases the formation of ribosomal termination complexes and stimulates activities of RF-1 and RF-2. It binds guanine nucleotides and has strong preference for UGA stop codons. It may interact directly with the ribosome. The stimulation of RF-1 and RF-2 is significantly reduced by GTP and GDP, but not by GMP. This is Peptide chain release factor 3 from Vibrio atlanticus (strain LGP32) (Vibrio splendidus (strain Mel32)).